A 319-amino-acid polypeptide reads, in one-letter code: MEAKGGTVKAASGFNATEDAQTLRKAMKGLGTDEDAIIGILAYRNTAQRQEIRSAYKSTIGRDLIEDLKSELSSNFEQVILGLMTPTVLYDVQELRRAMKGAGTDEGCLIEILASRTPEEIRRINQTYQQQYGRSLEEDICSDTSFMFQRVLVSLSAAGRDEGNYLDDALMKQDAQELYEAGEKRWGTDEVKFLSILCSRNRNHLLHVFDEYKRISQKDIEQSIKSETSGSFEDALLAIVKCMRSKPSYFAERLYKSMKGLGTDDNTLIRVMVSRAEIDMLDIRASFKRLYGKSLYSFIKGDTSGDYRKVLLVLCGGDD.

Threonine 7 is modified (phosphothreonine). Position 12 is a phosphoserine (serine 12). Annexin repeat units lie at residues 14–85 (FNAT…GLMT), 86–157 (PTVL…SLSA), 169–241 (ALMK…AIVK), and 245–316 (SKPS…VLCG). 3 positions are modified to N6-acetyllysine: lysine 213, lysine 293, and lysine 300.

Belongs to the annexin family.

Its subcellular location is the zymogen granule membrane. Functionally, calcium/phospholipid-binding protein which promotes membrane fusion and is involved in exocytosis. The sequence is that of Annexin A4 (Anxa4) from Mus musculus (Mouse).